The following is a 474-amino-acid chain: MANQLRERHQSLKKKYRELIDGDPSLPPEKRKQANLAQLLRDSQDRNKHLGEEIKELQQRLGEVQGDNKLLRMTIAKQRLGDEAIGVRHFAAHEREDLVQQLERAKEQIESLEHDLQASVDELQDVKEERSSYQDKVERLNQELNHILSGHENRIIDVDALCMENRYLQERLKQLHEEVNLLKSNIAKYKNALERRKNSKGQGKSSSSALTGVLSAKQVQDLLSEDHGCSLPATPQSISDLKSLATALLETIHEKNMVIQHQRQTNKILGNRVAELEKKLRTLEVSGLWSLPGGKDTILFSDPTLPSGQRSRSPLLKFVEQPTENKADPKDGEAQKQEEDESCAAAEALTAPEDAGRPAVNSPANQSRGNQCKLFHPSLPQLPSEEEVNSLGREIIKLTKEQAAAELEEVRRESPIEGQRSETGPAPPGLAIQGELPKSHLDSFEASRPAAKASTPEDGKGIPEGGGMRSTVKT.

Coiled coils occupy residues 1-199 (MANQ…RKNS) and 259-286 (IQHQ…LEVS). Disordered regions lie at residues 301–388 (SDPT…EEEV) and 405–474 (AELE…TVKT). Over residues 323–337 (TENKADPKDGEAQKQ) the composition is skewed to basic and acidic residues. Residues 343–353 (CAAAEALTAPE) show a composition bias toward low complexity. Residues 385–414 (EEEVNSLGREIIKLTKEQAAAELEEVRRES) adopt a coiled-coil conformation.

The protein belongs to the CCDC149 family.

The chain is Coiled-coil domain-containing protein 149 (CCDC149) from Homo sapiens (Human).